Reading from the N-terminus, the 169-residue chain is Disulfide bond formation protein B 1 (169 aa).

Residues 1-14 (MSDDRLGLGRERRF) are Cytoplasmic-facing. Residues 15-31 (LVLLGIICLALIGGALY) traverse the membrane as a helical segment. Residues 32–49 (MQVVLGEAPCPLCILQRY) are Periplasmic-facing. Cysteines 41 and 44 form a disulfide. The chain crosses the membrane as a helical span at residues 50–64 (ALLLIALFAFIGAAM). Residues 65-71 (SSRRGVT) lie on the Cytoplasmic side of the membrane. Residues 72–89 (VMETLVVICALAGAGVAG) traverse the membrane as a helical segment. The Periplasmic portion of the chain corresponds to 90–144 (HHVYTQFYPSVSCGIDVLQPIVDSLPLAKIFPLGFQVDGFCSTPYPPILGLSLAQ). Cys102 and Cys130 form a disulfide bridge. The helical transmembrane segment at 145 to 163 (WALVAFVLTVILVPLGVVR) threads the bilayer. The Cytoplasmic segment spans residues 164-169 (NRKKTY).

The protein belongs to the DsbB family.

Its subcellular location is the cell inner membrane. Its function is as follows. Required for disulfide bond formation in some periplasmic proteins. Acts by oxidizing the DsbA protein. The sequence is that of Disulfide bond formation protein B 1 from Pseudomonas fluorescens (strain ATCC BAA-477 / NRRL B-23932 / Pf-5).